Here is a 406-residue protein sequence, read N- to C-terminus: Formate-dependent phosphoribosylglycinamide formyltransferase (406 aa).

Residues 27 to 28 and glutamate 87 contribute to the N(1)-(5-phospho-beta-D-ribosyl)glycinamide site; that span reads EL. ATP-binding positions include arginine 120, lysine 162, 167–172, 202–205, and glutamate 210; these read SSGKGQ and EGFI. The 196-residue stretch at 125–320 folds into the ATP-grasp domain; that stretch reads RLAAETLGLP…EFELHARALL (196 aa). Mg(2+)-binding residues include glutamate 279 and glutamate 291. Residues aspartate 298, lysine 367, and 374-375 contribute to the N(1)-(5-phospho-beta-D-ribosyl)glycinamide site; that span reads RR.

It belongs to the PurK/PurT family. In terms of assembly, homodimer.

The catalysed reaction is N(1)-(5-phospho-beta-D-ribosyl)glycinamide + formate + ATP = N(2)-formyl-N(1)-(5-phospho-beta-D-ribosyl)glycinamide + ADP + phosphate + H(+). It functions in the pathway purine metabolism; IMP biosynthesis via de novo pathway; N(2)-formyl-N(1)-(5-phospho-D-ribosyl)glycinamide from N(1)-(5-phospho-D-ribosyl)glycinamide (formate route): step 1/1. Its function is as follows. Involved in the de novo purine biosynthesis. Catalyzes the transfer of formate to 5-phospho-ribosyl-glycinamide (GAR), producing 5-phospho-ribosyl-N-formylglycinamide (FGAR). Formate is provided by PurU via hydrolysis of 10-formyl-tetrahydrofolate. This Bordetella parapertussis (strain 12822 / ATCC BAA-587 / NCTC 13253) protein is Formate-dependent phosphoribosylglycinamide formyltransferase.